The sequence spans 531 residues: 4-hydroxyphenylacetaldehyde oxime monooxygenase (531 aa).

A helical membrane pass occupies residues 18-38; the sequence is WQTCLLVLLPVLLVSYYLLTS. Heme b contacts are provided by arginine 122, arginine 151, arginine 466, and cysteine 468.

It belongs to the cytochrome P450 family. Heme b is required as a cofactor.

The protein resides in the endoplasmic reticulum membrane. The catalysed reaction is (E)-4-hydroxyphenylacetaldehyde oxime + reduced [NADPH--hemoprotein reductase] + O2 = (S)-4-hydroxymandelonitrile + oxidized [NADPH--hemoprotein reductase] + 2 H2O + H(+). It catalyses the reaction (E)-4-hydroxyphenylacetaldehyde oxime = (Z)-(4-hydroxyphenyl)acetaldehyde oxime. It carries out the reaction (Z)-(4-hydroxyphenyl)acetaldehyde oxime = 4-hydroxyphenylacetonitrile + H2O. The enzyme catalyses 4-hydroxyphenylacetonitrile + reduced [NADPH--hemoprotein reductase] + O2 = (S)-4-hydroxymandelonitrile + oxidized [NADPH--hemoprotein reductase] + H2O + H(+). The protein operates within secondary metabolite biosynthesis; dhurrin biosynthesis; dhurrin from L-tyrosine: step 2/3. Functionally, cytochrome P450 involved in the biosynthesis of the cyanogenic glucoside dhurrin. Catalyzes the conversion of p-hydroxyphenylacetaldoxime to p-hydroxymandelonitrile via three different and successive activities: isomerization of the (E) isomer to the (Z) isomer of p-hydroxyphenylacetaldoxime, followed by dehydration of the oxime to the corresponding nitrile, and C-hydroxylation of the nitrile to produce p-hydroxymandelonitrile. The protein is 4-hydroxyphenylacetaldehyde oxime monooxygenase of Sorghum bicolor (Sorghum).